Here is a 282-residue protein sequence, read N- to C-terminus: MKIVTTVQEMQHITKELRASGKSIGFVPTMGYLHEGHATLLRKAREENEIVVLSVFVNPLQFGPNEDLDRYPRDIDRDENVAKENGVDYLFYPSVEEMYPAEQTTTVEVVKRTDVLCGKQRPGHFAGVATVLMKLFNITLPTRAYFGMKDAQQVAVIEGFVADFNIPVIIVPVDIVREEDGLAKSSRNVYLSQEERKEAPHLYRSLCMAKERIEAGERNAEIITTLVKEYIETYTKGTVDYADLYAYPSLQVVDQIEGRIILAIAVKFENVRLIDNITLTVK.

30–37 (MGYLHEGH) is an ATP binding site. His-37 (proton donor) is an active-site residue. Gln-61 serves as a coordination point for (R)-pantoate. A beta-alanine-binding site is contributed by Gln-61. 147–150 (GMKD) contacts ATP. Residue Gln-153 participates in (R)-pantoate binding. Residues Val-176 and 184-187 (KSSR) contribute to the ATP site.

It belongs to the pantothenate synthetase family. Homodimer.

The protein localises to the cytoplasm. The catalysed reaction is (R)-pantoate + beta-alanine + ATP = (R)-pantothenate + AMP + diphosphate + H(+). Its pathway is cofactor biosynthesis; (R)-pantothenate biosynthesis; (R)-pantothenate from (R)-pantoate and beta-alanine: step 1/1. Functionally, catalyzes the condensation of pantoate with beta-alanine in an ATP-dependent reaction via a pantoyl-adenylate intermediate. This chain is Pantothenate synthetase, found in Bacillus thuringiensis subsp. konkukian (strain 97-27).